Consider the following 436-residue polypeptide: T-box transcription factor TBX6 (436 aa).

The tract at residues 67-87 (PLLPSALGPETAPPPPEALHS) is disordered. A DNA-binding region (T-box) is located at residues 100–273 (LWKEFSAVGT…ANPFAKGFRE (174 aa)). Basic and acidic residues predominate over residues 275–284 (GRNCKRERDA). Disordered stretches follow at residues 275 to 344 (GRNC…CGGP) and 360 to 383 (PSHL…APYS). Over residues 332–344 (EAASASAPPCGGP) the composition is skewed to low complexity.

It localises to the nucleus. In terms of biological role, T-box transcription factor that plays an essential role in the determination of the fate of axial stem cells: neural vs mesodermal. Acts in part by down-regulating, a specific enhancer (N1) of SOX2, to inhibit neural development. Seems to also play an essential role in left/right axis determination and acts through effects on Notch signaling around the node as well as through an effect on the morphology and motility of the nodal cilia. In Rattus norvegicus (Rat), this protein is T-box transcription factor TBX6 (Tbx6).